The sequence spans 699 residues: MPTAIKKTFTYGAHTVTLETGEVARQAGGAVIVNVDDTVVLATVVAAKDAKPGQDFFPLTVDYVEKFYAAGRIPGGFFKREGRPTEKETLTSRLIDRPIRPLFPEGFYNEVQVIVTVLSLNPEVDADIPAMIAASAALSISGIPFDGPIGAARVGYADGQYLLNPTVEQLKTSKLNLVVAGTASAVLMVESEADELSEQVMLGAVVFGHEQMQAAINAINELVEVAGKPEWNWQPPAANDALVARVKELALADVEEAFRITSKQARTERLSEIRKRTIAALTDGVDNAPSENEIKDIFFTLEAGTVRSRILNGEPRIDGRDTRTVRPIDIRVGVLPRTHGSALFTRGETQALVVATLGTGRDEQIIDAIAGEYKERFMLHYNFPPFSTGETGRFGVTKRREIGHGRLAKRALVAMLPKGEDFSYTIRVVSEITESNGSSSMASVCGGSLALMDAGVPMKDHVAGIAMGLIKDGNRFAVLTDILGDEDHLGDMDFKVAGTENGVTALQMDIKIQGITKEIMQVALAQAGEGRLHILKQMKDALGVARGEVSEFAPRMLNMKINPEKIRDVIGKGGAVIRALQEETGTVIEIEDDGSITISSVSAEGAQKAKARIEDITAEVEVGKVYEGTVVRLLDFGAIVNILPGRDGLLHVSQIANERVNNVGDYVKEGQAVRVKVLETDERGKIRLSMKALLNENAG.

Positions 487 and 493 each coordinate Mg(2+). The region spanning 554–613 (PRMLNMKINPEKIRDVIGKGGAVIRALQEETGTVIEIEDDGSITISSVSAEGAQKAKARI) is the KH domain. Positions 623 to 691 (GKVYEGTVVR…ERGKIRLSMK (69 aa)) constitute an S1 motif domain.

It belongs to the polyribonucleotide nucleotidyltransferase family. Requires Mg(2+) as cofactor.

Its subcellular location is the cytoplasm. The enzyme catalyses RNA(n+1) + phosphate = RNA(n) + a ribonucleoside 5'-diphosphate. Functionally, involved in mRNA degradation. Catalyzes the phosphorolysis of single-stranded polyribonucleotides processively in the 3'- to 5'-direction. The sequence is that of Polyribonucleotide nucleotidyltransferase from Azoarcus sp. (strain BH72).